Reading from the N-terminus, the 268-residue chain is Syntaxin-22 (268 aa).

The tract at residues 1–23 (MSFQDLESGRGRSTRKFNGGRQD) is disordered. At S2 the chain carries N-acetylserine. Residues 2 to 246 (SFQDLESGRG…AAKTQKSNSS (245 aa)) are Cytoplasmic-facing. A t-SNARE coiled-coil homology domain is found at 175 to 237 (EAVIEEREQG…SQGKSQLVQA (63 aa)). Residues 247–267 (LTCLLLVIFGIVLLIVIIVLA) traverse the membrane as a helical; Anchor for type IV membrane protein segment. A268 is a topological domain (vesicular).

The protein belongs to the syntaxin family. Interacts with VTI11 and SYP51 to form a t-SNARE complex, but not with VPS45. Expressed in roots, leaves, stems, flower and green siliques.

It localises to the prevacuolar compartment membrane. Its subcellular location is the vacuole membrane. Functionally, may provide the t-SNARE function in the vacuolar assembly. Promotes the formation of vacuolar membrane 'bulbs'. Required for inflorescence stem gravitropism. The protein is Syntaxin-22 (SYP22) of Arabidopsis thaliana (Mouse-ear cress).